A 336-amino-acid chain; its full sequence is tRNA N6-adenosine threonylcarbamoyltransferase (336 aa).

Fe cation contacts are provided by H112 and H116. Substrate-binding positions include 136-140 (LVSGG), D169, G182, and N276. D304 serves as a coordination point for Fe cation.

This sequence belongs to the KAE1 / TsaD family. Fe(2+) is required as a cofactor.

The protein localises to the cytoplasm. It catalyses the reaction L-threonylcarbamoyladenylate + adenosine(37) in tRNA = N(6)-L-threonylcarbamoyladenosine(37) in tRNA + AMP + H(+). Functionally, required for the formation of a threonylcarbamoyl group on adenosine at position 37 (t(6)A37) in tRNAs that read codons beginning with adenine. Is involved in the transfer of the threonylcarbamoyl moiety of threonylcarbamoyl-AMP (TC-AMP) to the N6 group of A37, together with TsaE and TsaB. TsaD likely plays a direct catalytic role in this reaction. The polypeptide is tRNA N6-adenosine threonylcarbamoyltransferase (Francisella philomiragia subsp. philomiragia (strain ATCC 25017 / CCUG 19701 / FSC 153 / O#319-036)).